The primary structure comprises 337 residues: Glyceraldehyde-3-phosphate dehydrogenase 2 (337 aa).

Residues 11-12 (RI), D35, R79, and T121 each bind NAD(+). D-glyceraldehyde 3-phosphate is bound by residues 153 to 155 (SCT), T184, R199, 212 to 213 (TG), and R235. The active-site Nucleophile is the C154. N317 contributes to the NAD(+) binding site.

Belongs to the glyceraldehyde-3-phosphate dehydrogenase family. In terms of assembly, homotetramer.

It is found in the cytoplasm. It carries out the reaction D-glyceraldehyde 3-phosphate + phosphate + NADP(+) = (2R)-3-phospho-glyceroyl phosphate + NADPH + H(+). The catalysed reaction is D-glyceraldehyde 3-phosphate + phosphate + NAD(+) = (2R)-3-phospho-glyceroyl phosphate + NADH + H(+). The protein operates within carbohydrate degradation; glycolysis; pyruvate from D-glyceraldehyde 3-phosphate: step 1/5. Involved in photosynthetic carbon assimilation. Catalyzes the NAD(P)-dependent oxidative phosphorylation of glyceraldehyde 3-phosphate (G3P) to 1,3-bisphosphoglycerate (BPG). The first reaction step involves the formation of a hemiacetal intermediate between G3P and a cysteine residue, and this hemiacetal intermediate is then oxidized to a thioester, with concomitant reduction of NAD to NADH. The reduced NADH is then exchanged with the second NAD, and the thioester is attacked by a nucleophilic inorganic phosphate to produce BPG. It can use both NADP and NAD. This is Glyceraldehyde-3-phosphate dehydrogenase 2 (gap2) from Synechocystis sp. (strain ATCC 27184 / PCC 6803 / Kazusa).